A 418-amino-acid chain; its full sequence is D-amino acid dehydrogenase 1 (418 aa).

3–17 provides a ligand contact to FAD; the sequence is IMVLGGGVIGVTTAY.

The protein belongs to the DadA oxidoreductase family. FAD is required as a cofactor.

The enzyme catalyses a D-alpha-amino acid + A + H2O = a 2-oxocarboxylate + AH2 + NH4(+). The protein operates within amino-acid degradation; D-alanine degradation; NH(3) and pyruvate from D-alanine: step 1/1. Oxidative deamination of D-amino acids. In Mesorhizobium japonicum (strain LMG 29417 / CECT 9101 / MAFF 303099) (Mesorhizobium loti (strain MAFF 303099)), this protein is D-amino acid dehydrogenase 1 (dadA1).